Reading from the N-terminus, the 57-residue chain is MDVKYDLNSYVRVLKLASTPSWQEFSQISKIAGAGIFLVGLLGFIIFAVMSFLPGGV.

A helical transmembrane segment spans residues 33 to 53 (GAGIFLVGLLGFIIFAVMSFL).

It belongs to the SecE/SEC61-gamma family. In terms of assembly, component of the Sec protein translocase complex. Heterotrimer consisting of SecY (alpha), SecG (beta) and SecE (gamma) subunits. The heterotrimers can form oligomers, although 1 heterotrimer is thought to be able to translocate proteins. Interacts with the ribosome. May interact with SecDF, and other proteins may be involved.

Its subcellular location is the cell membrane. Functionally, essential subunit of the Sec protein translocation channel SecYEG. Clamps together the 2 halves of SecY. May contact the channel plug during translocation. The polypeptide is Protein translocase subunit SecE (Haloferax mediterranei (strain ATCC 33500 / DSM 1411 / JCM 8866 / NBRC 14739 / NCIMB 2177 / R-4) (Halobacterium mediterranei)).